Reading from the N-terminus, the 311-residue chain is 33 kDa chaperonin (311 aa).

Cystine bridges form between C240-C242 and C273-C276.

The protein belongs to the HSP33 family. Post-translationally, under oxidizing conditions two disulfide bonds are formed involving the reactive cysteines. Under reducing conditions zinc is bound to the reactive cysteines and the protein is inactive.

It is found in the cytoplasm. Functionally, redox regulated molecular chaperone. Protects both thermally unfolding and oxidatively damaged proteins from irreversible aggregation. Plays an important role in the bacterial defense system toward oxidative stress. The sequence is that of 33 kDa chaperonin from Trichodesmium erythraeum (strain IMS101).